Here is a 113-residue protein sequence, read N- to C-terminus: uncharacterized protein (113 aa).

Positions 1-19 (MDKKSAHRNPEDAKAGKYE) are enriched in basic and acidic residues. The segment at 1–94 (MDKKSAHRNP…NKWRGKRKVS (94 aa)) is disordered. A compositionally biased stretch (basic residues) spans 20-41 (GKHKRKKKRKQNQNQHRSRHRS). Positions 52–66 (FPSSSSSSSGSQTDS) are enriched in low complexity. A compositionally biased stretch (basic residues) spans 75 to 92 (KIKKKRREKTNKWRGKRK).

This is an uncharacterized protein from Macaca fascicularis (Crab-eating macaque).